The chain runs to 310 residues: tRNA dimethylallyltransferase (310 aa).

12–19 (GPTATGKT) lines the ATP pocket. Position 14–19 (14–19 (TATGKT)) interacts with substrate. Positions 37-40 (DSMM) are interaction with substrate tRNA.

The protein belongs to the IPP transferase family. In terms of assembly, monomer. It depends on Mg(2+) as a cofactor.

It catalyses the reaction adenosine(37) in tRNA + dimethylallyl diphosphate = N(6)-dimethylallyladenosine(37) in tRNA + diphosphate. In terms of biological role, catalyzes the transfer of a dimethylallyl group onto the adenine at position 37 in tRNAs that read codons beginning with uridine, leading to the formation of N6-(dimethylallyl)adenosine (i(6)A). The polypeptide is tRNA dimethylallyltransferase (Desulforudis audaxviator (strain MP104C)).